The following is a 784-amino-acid chain: LPS-assembly protein LptD (784 aa).

Positions 1-24 (MKKRIPTLLATMIATALYSQQGLA) are cleaved as a signal peptide. 2 cysteine pairs are disulfide-bonded: cysteine 31/cysteine 724 and cysteine 173/cysteine 725.

This sequence belongs to the LptD family. As to quaternary structure, component of the lipopolysaccharide transport and assembly complex. Interacts with LptE and LptA. Post-translationally, contains two intramolecular disulfide bonds.

It is found in the cell outer membrane. Its function is as follows. Together with LptE, is involved in the assembly of lipopolysaccharide (LPS) at the surface of the outer membrane. The chain is LPS-assembly protein LptD from Escherichia coli O1:K1 / APEC.